We begin with the raw amino-acid sequence, 656 residues long: MASTASVSTSTASSELSSLSNNINNAADISVIVIYFVVVMAVGVWAMLKTNRSTVGGFFLAGRSMTWWPMGASLFASNIGSGHFVGLAGTGAASGIAVTAFESHSFALLLVLGWIFVPIYIKAGVMTMPEYLKKRFGGKRLQIYLSILFLFICVILTISADIFSGAIFIKLALGLNLYLAILILLAITAIFTITGGLASVIYTDTVQAVIMLVGSFILMVFAFVEVGGYESFTEKFMNAIPSVVEGDNLTINSRCYTPQPDSFHIFRDPVTGDIPWPGTAFGMPITALWYWCINQVIVQRCLCGKNLSHVKAACILCGYLKLLPLFFMVMPGMISRILYTDMVACVVPSECVKHCGVDVGCTNYAYPMLVLKLMPMGLRGLMLSVMLASLMSSLTSVFNSASTLFTIDLYTKIRKKASERELLIAGRLFVSVLIVTSILWVPIVEVSQGGQLVHYTEAISSYLGPPIAAVFLVAVFCKRANEQGAFWGLMVGLVMGLIRMIAEFSYGTGSCLAPSSCPKIICGVHYLYFAIILFFVCILVILGVSYLTKPIPDVHLHRLCWALRNSKEERIDLDAEDKEENGADDRTEEDQTEKPRGCLKKTCDLFCGLQRAEFKLTKVEEEALTDTTEKPFWRTVMNVNVILLLAVAAFFYGYFA.

The Cytoplasmic segment spans residues 1 to 28; the sequence is MASTASVSTSTASSELSSLSNNINNAAD. The helical transmembrane segment at 29–47 threads the bilayer; the sequence is ISVIVIYFVVVMAVGVWAM. The Extracellular portion of the chain corresponds to 48 to 64; it reads LKTNRSTVGGFFLAGRS. Residues 65-85 traverse the membrane as a helical segment; it reads MTWWPMGASLFASNIGSGHFV. Over 86 to 105 the chain is Cytoplasmic; that stretch reads GLAGTGAASGIAVTAFESHS. The helical transmembrane segment at 106 to 126 threads the bilayer; the sequence is FALLLVLGWIFVPIYIKAGVM. The Extracellular segment spans residues 127-171; the sequence is TMPEYLKKRFGGKRLQIYLSILFLFICVILTISADIFSGAIFIKL. The helical transmembrane segment at 172–191 threads the bilayer; sequence ALGLNLYLAILILLAITAIF. Over 192 to 208 the chain is Cytoplasmic; sequence TITGGLASVIYTDTVQA. The helical transmembrane segment at 209 to 229 threads the bilayer; it reads VIMLVGSFILMVFAFVEVGGY. Residues 230–270 are Extracellular-facing; the sequence is ESFTEKFMNAIPSVVEGDNLTINSRCYTPQPDSFHIFRDPV. Residue Asn-248 is glycosylated (N-linked (GlcNAc...) asparagine). Residues 271–291 form a helical membrane-spanning segment; sequence TGDIPWPGTAFGMPITALWYW. Topologically, residues 292-314 are cytoplasmic; it reads CINQVIVQRCLCGKNLSHVKAAC. The helical transmembrane segment at 315–334 threads the bilayer; that stretch reads ILCGYLKLLPLFFMVMPGMI. Residues 335–423 are Extracellular-facing; it reads SRILYTDMVA…RKKASERELL (89 aa). A helical membrane pass occupies residues 424–443; it reads IAGRLFVSVLIVTSILWVPI. The Cytoplasmic segment spans residues 444-455; sequence VEVSQGGQLVHY. The chain crosses the membrane as a helical span at residues 456–476; the sequence is TEAISSYLGPPIAAVFLVAVF. Residues 477 to 526 lie on the Extracellular side of the membrane; it reads CKRANEQGAFWGLMVGLVMGLIRMIAEFSYGTGSCLAPSSCPKIICGVHY. Residues 527–547 traverse the membrane as a helical segment; that stretch reads LYFAIILFFVCILVILGVSYL. Residues 548 to 634 lie on the Cytoplasmic side of the membrane; sequence TKPIPDVHLH…TDTTEKPFWR (87 aa). The tract at residues 574–593 is disordered; sequence DAEDKEENGADDRTEEDQTE. A helical membrane pass occupies residues 635-655; the sequence is TVMNVNVILLLAVAAFFYGYF.

Belongs to the sodium:solute symporter (SSF) (TC 2.A.21) family. In terms of tissue distribution, expressed in small intestine. Expressed in kidney.

It localises to the cell membrane. Not inhibited by phlorizin. Does not function as sodium/D-glucose symporter. Generates D-glucose-induced depolarization in a pH-dependent manner, with activity in acidic conditions (pH 5) but not neutral conditions. In Mus musculus (Mouse), this protein is Solute carrier family 5 member 4A.